A 189-amino-acid polypeptide reads, in one-letter code: CDP-archaeol synthase (189 aa).

The next 5 helical transmembrane spans lie at Val-6–Ala-26, Gly-71–Val-91, Ile-96–Leu-116, Gly-125–Ala-145, and Val-162–Leu-184.

It belongs to the CDP-archaeol synthase family. Mg(2+) serves as cofactor.

The protein localises to the cell membrane. The catalysed reaction is 2,3-bis-O-(geranylgeranyl)-sn-glycerol 1-phosphate + CTP + H(+) = CDP-2,3-bis-O-(geranylgeranyl)-sn-glycerol + diphosphate. Its pathway is membrane lipid metabolism; glycerophospholipid metabolism. Catalyzes the formation of CDP-2,3-bis-(O-geranylgeranyl)-sn-glycerol (CDP-archaeol) from 2,3-bis-(O-geranylgeranyl)-sn-glycerol 1-phosphate (DGGGP) and CTP. This reaction is the third ether-bond-formation step in the biosynthesis of archaeal membrane lipids. This chain is CDP-archaeol synthase, found in Natronomonas pharaonis (strain ATCC 35678 / DSM 2160 / CIP 103997 / JCM 8858 / NBRC 14720 / NCIMB 2260 / Gabara) (Halobacterium pharaonis).